The chain runs to 559 residues: Dihydroxy-acid dehydratase (559 aa).

Asp81 serves as a coordination point for Mg(2+). Cys122 provides a ligand contact to [2Fe-2S] cluster. Positions 123 and 124 each coordinate Mg(2+). Position 124 is an N6-carboxylysine (Lys124). Cys195 serves as a coordination point for [2Fe-2S] cluster. Residue Glu448 participates in Mg(2+) binding. The Proton acceptor role is filled by Ser474.

This sequence belongs to the IlvD/Edd family. Homodimer. It depends on [2Fe-2S] cluster as a cofactor. The cofactor is Mg(2+).

It catalyses the reaction (2R)-2,3-dihydroxy-3-methylbutanoate = 3-methyl-2-oxobutanoate + H2O. It carries out the reaction (2R,3R)-2,3-dihydroxy-3-methylpentanoate = (S)-3-methyl-2-oxopentanoate + H2O. It participates in amino-acid biosynthesis; L-isoleucine biosynthesis; L-isoleucine from 2-oxobutanoate: step 3/4. The protein operates within amino-acid biosynthesis; L-valine biosynthesis; L-valine from pyruvate: step 3/4. In terms of biological role, functions in the biosynthesis of branched-chain amino acids. Catalyzes the dehydration of (2R,3R)-2,3-dihydroxy-3-methylpentanoate (2,3-dihydroxy-3-methylvalerate) into 2-oxo-3-methylpentanoate (2-oxo-3-methylvalerate) and of (2R)-2,3-dihydroxy-3-methylbutanoate (2,3-dihydroxyisovalerate) into 2-oxo-3-methylbutanoate (2-oxoisovalerate), the penultimate precursor to L-isoleucine and L-valine, respectively. The protein is Dihydroxy-acid dehydratase of Geobacillus kaustophilus (strain HTA426).